A 459-amino-acid polypeptide reads, in one-letter code: Bifunctional protein GlmU (459 aa).

The segment at 1–229 (MSNFAIXLAA…FDESLGVNDR (229 aa)) is pyrophosphorylase. UDP-N-acetyl-alpha-D-glucosamine-binding positions include 8 to 11 (LAAG), Lys-22, Gln-72, and 77 to 78 (GT). Position 102 (Asp-102) interacts with Mg(2+). Residues Gly-139, Glu-154, Asn-169, and Asn-227 each coordinate UDP-N-acetyl-alpha-D-glucosamine. Mg(2+) is bound at residue Asn-227. Residues 230 to 250 (VALATAESVMRRRINHKHMVN) form a linker region. The tract at residues 251–459 (GVSFVNPEAT…TRLPHHPKNQ (209 aa)) is N-acetyltransferase. Positions 332 and 350 each coordinate UDP-N-acetyl-alpha-D-glucosamine. His-362 functions as the Proton acceptor in the catalytic mechanism. UDP-N-acetyl-alpha-D-glucosamine-binding residues include Tyr-365 and Asn-376. Residues Ala-379, 385–386 (NY), Ser-404, Ala-422, and Arg-439 contribute to the acetyl-CoA site.

This sequence in the N-terminal section; belongs to the N-acetylglucosamine-1-phosphate uridyltransferase family. In the C-terminal section; belongs to the transferase hexapeptide repeat family. As to quaternary structure, homotrimer. The cofactor is Mg(2+).

Its subcellular location is the cytoplasm. The enzyme catalyses alpha-D-glucosamine 1-phosphate + acetyl-CoA = N-acetyl-alpha-D-glucosamine 1-phosphate + CoA + H(+). It carries out the reaction N-acetyl-alpha-D-glucosamine 1-phosphate + UTP + H(+) = UDP-N-acetyl-alpha-D-glucosamine + diphosphate. The protein operates within nucleotide-sugar biosynthesis; UDP-N-acetyl-alpha-D-glucosamine biosynthesis; N-acetyl-alpha-D-glucosamine 1-phosphate from alpha-D-glucosamine 6-phosphate (route II): step 2/2. It participates in nucleotide-sugar biosynthesis; UDP-N-acetyl-alpha-D-glucosamine biosynthesis; UDP-N-acetyl-alpha-D-glucosamine from N-acetyl-alpha-D-glucosamine 1-phosphate: step 1/1. Its pathway is bacterial outer membrane biogenesis; LPS lipid A biosynthesis. Catalyzes the last two sequential reactions in the de novo biosynthetic pathway for UDP-N-acetylglucosamine (UDP-GlcNAc). The C-terminal domain catalyzes the transfer of acetyl group from acetyl coenzyme A to glucosamine-1-phosphate (GlcN-1-P) to produce N-acetylglucosamine-1-phosphate (GlcNAc-1-P), which is converted into UDP-GlcNAc by the transfer of uridine 5-monophosphate (from uridine 5-triphosphate), a reaction catalyzed by the N-terminal domain. In Streptococcus pneumoniae serotype 19F (strain G54), this protein is Bifunctional protein GlmU.